The sequence spans 224 residues: Urease accessory protein UreF (224 aa).

This sequence belongs to the UreF family. UreD, UreF and UreG form a complex that acts as a GTP-hydrolysis-dependent molecular chaperone, activating the urease apoprotein by helping to assemble the nickel containing metallocenter of UreC. The UreE protein probably delivers the nickel.

The protein resides in the cytoplasm. Functionally, required for maturation of urease via the functional incorporation of the urease nickel metallocenter. In Pseudomonas putida (strain ATCC 47054 / DSM 6125 / CFBP 8728 / NCIMB 11950 / KT2440), this protein is Urease accessory protein UreF.